We begin with the raw amino-acid sequence, 208 residues long: FMRFamide-like neuropeptide 18 (208 aa).

An N-terminal signal peptide occupies residues 1 to 21; that stretch reads MQRWSGVLLISLCCLLRGALA. A propeptide spanning residues 22-83 is cleaved from the precursor; that stretch reads YTEPIYEIVE…VWEKRESSVQ (62 aa). A Phenylalanine amide modification is found at Phe-93. A propeptide spanning residues 97–101 is cleaved from the precursor; it reads AYFDE. Phe-111 bears the Phenylalanine amide mark. Positions 115-119 are excised as a propeptide; sequence SYFDE. The residue at position 129 (Phe-129) is a Phenylalanine amide. Positions 133-137 are excised as a propeptide; that stretch reads DVPMD. Phe-147 is modified (phenylalanine amide). A propeptide spanning residues 151-158 is cleaved from the precursor; sequence DYMADSFD. Phenylalanine amide occurs at positions 169 and 180. Residues 184–195 constitute a propeptide that is removed on maturation; the sequence is SDLEEHYAGVLL. Position 205 is a phenylalanine amide (Phe-205).

The protein belongs to the FARP (FMRFamide related peptide) family. In terms of processing, may be processed by convertase egl-3. In terms of tissue distribution, expressed in head neurons and weakly in ventral nerve cord. Expressed in the interneurons AVA, AIY and RIG, the motor neuron RIM and the pharyngeal neurons M2 and M3. EMPGVLRF-amide: Expressed in cholinergic pharyngeal motoneurons M2 and M3.

The protein resides in the secreted. In terms of biological role, FMRFamide-like neuropeptides. Ligand to G-protein coupled receptor npr-1. Involved in modulating locomotion quiescence during the sleep-like state called lethargus which occurs during molting between larval and adult stages, acting via npr-1. Together with flp-1, plays a homeostatic role by acting on the GABAergic neural transmission at neuromuscular junctions to prevent overexcitation of the locomotor circuit. Plays a role in the navigational capacity of sperm and the targeting of sperm derived from males to the fertilization site in the uterus of hermaphrodites. Its function is as follows. SVPGVLRF-amide: Excites muscle tension. Activates the G-protein coupled receptor npr-1 more effectively than other flp-18 peptides. Inhibits the activity of dissected pharyngeal myogenic muscle system. The protein is FMRFamide-like neuropeptide 18 of Caenorhabditis elegans.